A 215-amino-acid polypeptide reads, in one-letter code: Thiamine-phosphate synthase (215 aa).

4-amino-2-methyl-5-(diphosphooxymethyl)pyrimidine contacts are provided by residues 42–46 and aspartate 77; that span reads QYREK. Residues aspartate 78 and aspartate 97 each contribute to the Mg(2+) site. Serine 116 is a binding site for 4-amino-2-methyl-5-(diphosphooxymethyl)pyrimidine. 143-145 lines the 2-[(2R,5Z)-2-carboxy-4-methylthiazol-5(2H)-ylidene]ethyl phosphate pocket; sequence TKS. Lysine 146 lines the 4-amino-2-methyl-5-(diphosphooxymethyl)pyrimidine pocket. 2-[(2R,5Z)-2-carboxy-4-methylthiazol-5(2H)-ylidene]ethyl phosphate-binding positions include glycine 174 and 194-195; that span reads IS.

The protein belongs to the thiamine-phosphate synthase family. It depends on Mg(2+) as a cofactor.

It catalyses the reaction 2-[(2R,5Z)-2-carboxy-4-methylthiazol-5(2H)-ylidene]ethyl phosphate + 4-amino-2-methyl-5-(diphosphooxymethyl)pyrimidine + 2 H(+) = thiamine phosphate + CO2 + diphosphate. It carries out the reaction 2-(2-carboxy-4-methylthiazol-5-yl)ethyl phosphate + 4-amino-2-methyl-5-(diphosphooxymethyl)pyrimidine + 2 H(+) = thiamine phosphate + CO2 + diphosphate. The enzyme catalyses 4-methyl-5-(2-phosphooxyethyl)-thiazole + 4-amino-2-methyl-5-(diphosphooxymethyl)pyrimidine + H(+) = thiamine phosphate + diphosphate. The protein operates within cofactor biosynthesis; thiamine diphosphate biosynthesis; thiamine phosphate from 4-amino-2-methyl-5-diphosphomethylpyrimidine and 4-methyl-5-(2-phosphoethyl)-thiazole: step 1/1. Its function is as follows. Condenses 4-methyl-5-(beta-hydroxyethyl)thiazole monophosphate (THZ-P) and 2-methyl-4-amino-5-hydroxymethyl pyrimidine pyrophosphate (HMP-PP) to form thiamine monophosphate (TMP). This chain is Thiamine-phosphate synthase, found in Limosilactobacillus reuteri (strain DSM 20016) (Lactobacillus reuteri).